Here is a 306-residue protein sequence, read N- to C-terminus: Methionyl-tRNA formyltransferase (306 aa).

110-113 contacts (6S)-5,6,7,8-tetrahydrofolate; it reads SLLP.

Belongs to the Fmt family.

It catalyses the reaction L-methionyl-tRNA(fMet) + (6R)-10-formyltetrahydrofolate = N-formyl-L-methionyl-tRNA(fMet) + (6S)-5,6,7,8-tetrahydrofolate + H(+). In terms of biological role, attaches a formyl group to the free amino group of methionyl-tRNA(fMet). The formyl group appears to play a dual role in the initiator identity of N-formylmethionyl-tRNA by promoting its recognition by IF2 and preventing the misappropriation of this tRNA by the elongation apparatus. This chain is Methionyl-tRNA formyltransferase, found in Brucella suis biovar 1 (strain 1330).